Consider the following 486-residue polypeptide: Galactose-3-O-sulfotransferase 4 (486 aa).

The Cytoplasmic segment spans residues 1-18 (MGPLSPARTLRLWGPRSL). Residues 19-39 (GVALGVFMTIGFALQLLGGPF) form a helical; Signal-anchor for type II membrane protein membrane-spanning segment. At 40-486 (QRRLPGLQLR…PLKTSRPLSP (447 aa)) the chain is on the lumenal side. An N-linked (GlcNAc...) asparagine glycan is attached at Asn-374.

Belongs to the galactose-3-O-sulfotransferase family. Mn(2+) is required as a cofactor. As to expression, expressed mainly in placenta, thymus, testis, ovary, spinal cord, trachea and adrenal gland and at low levels in brain, lung, spleen, prostate, small intestine, colon, stomach thyroid and lymph node.

The protein localises to the golgi apparatus. It localises to the golgi stack membrane. It functions in the pathway protein modification; carbohydrate sulfation. Functionally, catalyzes the transfer of sulfate to beta-1,3-linked galactose residues in O-linked glycoproteins. Good substrates include asialofetuin, Gal-beta-1,3-GalNAc and Gal-beta-1,3 (GlcNAc-beta-1,6)GalNAc. The sequence is that of Galactose-3-O-sulfotransferase 4 (GAL3ST4) from Homo sapiens (Human).